We begin with the raw amino-acid sequence, 290 residues long: Formamidopyrimidine-DNA glycosylase (290 aa).

Pro2 acts as the Schiff-base intermediate with DNA in catalysis. Glu3 functions as the Proton donor in the catalytic mechanism. Lys58 functions as the Proton donor; for beta-elimination activity in the catalytic mechanism. Positions 98, 126, and 171 each coordinate DNA. Residues 256-290 (FVYDRAGLPCRVCATPVRQIVQGQRSTFYCPKCQH) form an FPG-type zinc finger. Arg280 serves as the catalytic Proton donor; for delta-elimination activity.

It belongs to the FPG family. As to quaternary structure, monomer. Requires Zn(2+) as cofactor.

It catalyses the reaction Hydrolysis of DNA containing ring-opened 7-methylguanine residues, releasing 2,6-diamino-4-hydroxy-5-(N-methyl)formamidopyrimidine.. The catalysed reaction is 2'-deoxyribonucleotide-(2'-deoxyribose 5'-phosphate)-2'-deoxyribonucleotide-DNA = a 3'-end 2'-deoxyribonucleotide-(2,3-dehydro-2,3-deoxyribose 5'-phosphate)-DNA + a 5'-end 5'-phospho-2'-deoxyribonucleoside-DNA + H(+). Involved in base excision repair of DNA damaged by oxidation or by mutagenic agents. Acts as a DNA glycosylase that recognizes and removes damaged bases. Has a preference for oxidized purines, such as 7,8-dihydro-8-oxoguanine (8-oxoG). Has AP (apurinic/apyrimidinic) lyase activity and introduces nicks in the DNA strand. Cleaves the DNA backbone by beta-delta elimination to generate a single-strand break at the site of the removed base with both 3'- and 5'-phosphates. The sequence is that of Formamidopyrimidine-DNA glycosylase from Cupriavidus taiwanensis (strain DSM 17343 / BCRC 17206 / CCUG 44338 / CIP 107171 / LMG 19424 / R1) (Ralstonia taiwanensis (strain LMG 19424)).